Here is a 182-residue protein sequence, read N- to C-terminus: MDSVVFYMKVNVGSGNPVKVRATENVLGLIYGNVEVRGVEVESGVPDQPVGLEETVRGAVNRARRAFRDCELSVGIESGLHRVPETITGFVDLQWCAIYDGEHITLGVSAGFEYPPMVVEEVLAGREVGDVMDELTGVDELGRKRGAVSFLSGGLLDRTGNTEQCVLMAMIPRMNPSLYGLK.

Residues Glu-42 and Asp-69 each coordinate Mg(2+).

This sequence belongs to the YjjX NTPase family. Homodimer. The cofactor is Mg(2+). It depends on Mn(2+) as a cofactor.

The enzyme catalyses XTP + H2O = XDP + phosphate + H(+). It catalyses the reaction ITP + H2O = IDP + phosphate + H(+). In terms of biological role, phosphatase that hydrolyzes non-canonical purine nucleotides such as XTP and ITP to their respective diphosphate derivatives. Probably excludes non-canonical purines from DNA/RNA precursor pool, thus preventing their incorporation into DNA/RNA and avoiding chromosomal lesions. This Methanothermobacter thermautotrophicus (strain ATCC 29096 / DSM 1053 / JCM 10044 / NBRC 100330 / Delta H) (Methanobacterium thermoautotrophicum) protein is Probable inosine/xanthosine triphosphatase.